Reading from the N-terminus, the 407-residue chain is Protein arginine N-methyltransferase 2 (407 aa).

In terms of domain architecture, RMT2 spans 186-407 (TAADQATYLK…YYYHPEIRFA (222 aa)). Residues Tyr-193, Met-223, 246 to 251 (FGMGII), 267 to 269 (EAH), 294 to 295 (WQ), and Asp-315 contribute to the S-adenosyl-L-methionine site.

This sequence belongs to the class I-like SAM-binding methyltransferase superfamily. RMT2 methyltransferase family. As to quaternary structure, monomer.

Its subcellular location is the cytoplasm. The protein localises to the nucleus. S-adenosyl-L-methionine-dependent protein-arginine N-methyltransferase that methylates the delta-nitrogen atom of arginine residues to form N5-methylarginine (type IV) in target proteins. Monomethylates ribosomal protein L12. This chain is Protein arginine N-methyltransferase 2, found in Kluyveromyces lactis (strain ATCC 8585 / CBS 2359 / DSM 70799 / NBRC 1267 / NRRL Y-1140 / WM37) (Yeast).